The chain runs to 195 residues: Imidazoleglycerol-phosphate dehydratase (195 aa).

This sequence belongs to the imidazoleglycerol-phosphate dehydratase family.

The protein resides in the cytoplasm. It catalyses the reaction D-erythro-1-(imidazol-4-yl)glycerol 3-phosphate = 3-(imidazol-4-yl)-2-oxopropyl phosphate + H2O. Its pathway is amino-acid biosynthesis; L-histidine biosynthesis; L-histidine from 5-phospho-alpha-D-ribose 1-diphosphate: step 6/9. This chain is Imidazoleglycerol-phosphate dehydratase, found in Clostridium botulinum (strain Alaska E43 / Type E3).